The sequence spans 318 residues: MYNYNYSRGNKSMGNPPRFHELTDMPDNGASTSAAAGMFTRQDSLALAASLQQRDRERNPVDFMETQLDLDNYLQCFTDLDVPADNVDLNDAELQKANILYDDDSYEQPQLNPYERHVAYGPGFRNPGEYEEQDGYKMNFEVKTEEEKKPETMKTSKTMTTRRAIKRPSCYDDYQEEGETSLSDNDESVDDSYYKPKSSKKTAAAVPNFVPKTKARKYNLKPDKEKVEPIYKLKRARNNDAVRKSRNKAKELQLQKDEEYDEMKKRITQLEAELQSEREGRERDQQLIKQLIREKESTSKGPRKSSRNALESFNKSNY.

A compositionally biased stretch (polar residues) spans 1–13; sequence MYNYNYSRGNKSM. Disordered stretches follow at residues 1–20, 147–205, 238–257, and 273–318; these read MYNY…PRFH, EKKP…TAAA, NNDA…LQKD, and ELQS…KSNY. Residues 173–190 show a composition bias toward acidic residues; the sequence is DYQEEGETSLSDNDESVD. One can recognise a bZIP domain in the interval 228-291; sequence EPIYKLKRAR…ERDQQLIKQL (64 aa). The segment at 232 to 266 is basic motif; it reads KLKRARNNDAVRKSRNKAKELQLQKDEEYDEMKKR. Positions 242 to 280 form a coiled coil; the sequence is VRKSRNKAKELQLQKDEEYDEMKKRITQLEAELQSEREG. Residues 267–274 are leucine-zipper; sequence ITQLEAEL. Over residues 275–298 the composition is skewed to basic and acidic residues; the sequence is QSEREGRERDQQLIKQLIREKEST. The segment covering 307-318 has biased composition (polar residues); it reads RNALESFNKSNY.

Belongs to the bZIP family. C/EBP subfamily.

The protein localises to the nucleus. Transcription factor that binds to the promoter and the enhancer regions of target genes. Involved in responding to mitochondrial damage. Has a protective role in response to infection by the Gram-negative bacterium P.aeruginosa. The polypeptide is Transcription factor zip-4 (Caenorhabditis elegans).